Consider the following 90-residue polypeptide: Putative regulatory protein NT01CX_2250 (90 aa).

The protein belongs to the RemA family.

This is Putative regulatory protein NT01CX_2250 from Clostridium novyi (strain NT).